The sequence spans 112 residues: Nucleoid-associated protein FTH_1374 (112 aa).

The tract at residues 1-27 (MNFDMSKLMQQAQKMQEQMKKAQQERE) is disordered. Positions 17–27 (EQMKKAQQERE) are enriched in basic and acidic residues.

Belongs to the YbaB/EbfC family. As to quaternary structure, homodimer.

It localises to the cytoplasm. The protein localises to the nucleoid. Its function is as follows. Binds to DNA and alters its conformation. May be involved in regulation of gene expression, nucleoid organization and DNA protection. This is Nucleoid-associated protein FTH_1374 from Francisella tularensis subsp. holarctica (strain OSU18).